Consider the following 96-residue polypeptide: Cytochrome b (96 aa).

A run of 3 helical transmembrane segments spans residues 1 to 15 (LCXI…FLAM), 39 to 60 (WLIR…YLHI), and 75 to 95 (WNVG…GYVL). Positions 45 and 59 each coordinate heme b.

It belongs to the cytochrome b family. The cytochrome bc1 complex contains 3 respiratory subunits (MT-CYB, CYC1 and UQCRFS1), 2 core proteins (UQCRC1 and UQCRC2) and probably 6 low-molecular weight proteins. Requires heme b as cofactor.

The protein resides in the mitochondrion inner membrane. Component of the ubiquinol-cytochrome c reductase complex (complex III or cytochrome b-c1 complex) that is part of the mitochondrial respiratory chain. The b-c1 complex mediates electron transfer from ubiquinol to cytochrome c. Contributes to the generation of a proton gradient across the mitochondrial membrane that is then used for ATP synthesis. In Geophagus steindachneri (Red hump earth eater), this protein is Cytochrome b (mt-cyb).